The following is a 346-amino-acid chain: NADH-ubiquinone oxidoreductase chain 2 (346 aa).

The next 10 membrane-spanning stretches (helical) occupy residues 3-23 (PIIF…VMIS), 25-45 (HWLL…PIMM), 67-87 (SMLL…WTVM), 96-116 (MLMT…FWVP), 122-142 (IPLS…MSVL), 145-165 (IFPS…ILIG), 200-220 (TLLN…MFMA), 238-258 (IMTI…PLSG), 273-293 (NSII…YFYM), and 324-344 (FLPT…MLSV).

Belongs to the complex I subunit 2 family. In terms of assembly, core subunit of respiratory chain NADH dehydrogenase (Complex I) which is composed of 45 different subunits. Interacts with TMEM242.

The protein resides in the mitochondrion inner membrane. It catalyses the reaction a ubiquinone + NADH + 5 H(+)(in) = a ubiquinol + NAD(+) + 4 H(+)(out). Its function is as follows. Core subunit of the mitochondrial membrane respiratory chain NADH dehydrogenase (Complex I) which catalyzes electron transfer from NADH through the respiratory chain, using ubiquinone as an electron acceptor. Essential for the catalytic activity and assembly of complex I. The chain is NADH-ubiquinone oxidoreductase chain 2 from Bos mutus grunniens (Wild yak).